We begin with the raw amino-acid sequence, 247 residues long: Putative urease accessory protein UreD homolog (247 aa).

This sequence belongs to the UreD family. UreD, UreF and UreG form a complex that acts as a GTP-hydrolysis-dependent molecular chaperone, activating the urease apoprotein by helping to assemble the nickel containing metallocenter of UreC. The UreE protein probably delivers the nickel.

It localises to the cytoplasm. Functionally, required for maturation of urease via the functional incorporation of the urease nickel metallocenter. This is Putative urease accessory protein UreD homolog from Escherichia coli O157:H7.